A 374-amino-acid chain; its full sequence is Anhydro-N-acetylmuramic acid kinase (374 aa).

12-19 lines the ATP pocket; it reads GTSLDGVD.

Belongs to the anhydro-N-acetylmuramic acid kinase family.

It catalyses the reaction 1,6-anhydro-N-acetyl-beta-muramate + ATP + H2O = N-acetyl-D-muramate 6-phosphate + ADP + H(+). Its pathway is amino-sugar metabolism; 1,6-anhydro-N-acetylmuramate degradation. The protein operates within cell wall biogenesis; peptidoglycan recycling. Catalyzes the specific phosphorylation of 1,6-anhydro-N-acetylmuramic acid (anhMurNAc) with the simultaneous cleavage of the 1,6-anhydro ring, generating MurNAc-6-P. Is required for the utilization of anhMurNAc either imported from the medium or derived from its own cell wall murein, and thus plays a role in cell wall recycling. This is Anhydro-N-acetylmuramic acid kinase from Salmonella arizonae (strain ATCC BAA-731 / CDC346-86 / RSK2980).